Reading from the N-terminus, the 241-residue chain is Mitochondrial inner membrane protease ATP23 (241 aa).

His141 is an a divalent metal cation binding site. Glu142 is a catalytic residue. His145 contacts a divalent metal cation.

It belongs to the peptidase M76 family.

The protein resides in the mitochondrion inner membrane. Functionally, has a dual role in the assembly of mitochondrial ATPase. Acts as a protease that removes N-terminal residues of mitochondrial ATPase CF(0) subunit 6 at the intermembrane space side. Also involved in the correct assembly of the membrane-embedded ATPase CF(0) particle, probably mediating association of subunit 6 with the subunit 9 ring. In Lodderomyces elongisporus (strain ATCC 11503 / CBS 2605 / JCM 1781 / NBRC 1676 / NRRL YB-4239) (Yeast), this protein is Mitochondrial inner membrane protease ATP23 (ATP23).